A 382-amino-acid chain; its full sequence is Adaptive-response sensory kinase SasA (382 aa).

The Histidine kinase domain maps to 160–382 (MLAHDLRSPL…CFHFTLPVYR (223 aa)). Residue His163 is modified to Phosphohistidine; by autocatalysis.

As to quaternary structure, homooligomerizes. Interacts with KaiC. Participates in the KaiABC clock complex, whose core is composed of a KaiC homohexamer, 6 KaiB and up to 6 KaiA dimers. SasA and KaiB(fs) compete to bind to KaiC.

The catalysed reaction is ATP + protein L-histidine = ADP + protein N-phospho-L-histidine.. In terms of biological role, member of the two-component regulatory system SasA/RpaA involved in genome-wide circadian gene expression. One of several clock output pathways. Participates in the Kai clock protein complex, the main circadian regulator in cyanobacteria, via its interaction with KaiC. KaiC enhances the autophosphorylation activity of SasA, which then transfers its phosphate group to RpaA to activate it. In addition to its output function, recruits fold-shifted KaiB (KaiB(fs)) to KaiC to cooperatively form the KaiB(6):KaiC(6) complex (independent of SasA kinase activity). Required for robustness of the circadian rhythm of gene expression and is involved in clock output, also required for adaptation to light/dark cycles. This chain is Adaptive-response sensory kinase SasA, found in Crocosphaera subtropica (strain ATCC 51142 / BH68) (Cyanothece sp. (strain ATCC 51142)).